Here is an 84-residue protein sequence, read N- to C-terminus: ATP synthase subunit c (84 aa).

The next 2 membrane-spanning stretches (helical) occupy residues 10-30 (IAVA…FAIL) and 53-73 (FIVA…ALFF).

Belongs to the ATPase C chain family. As to quaternary structure, F-type ATPases have 2 components, F(1) - the catalytic core - and F(0) - the membrane proton channel. F(1) has five subunits: alpha(3), beta(3), gamma(1), delta(1), epsilon(1). F(0) has three main subunits: a(1), b(2) and c(10-14). The alpha and beta chains form an alternating ring which encloses part of the gamma chain. F(1) is attached to F(0) by a central stalk formed by the gamma and epsilon chains, while a peripheral stalk is formed by the delta and b chains.

The protein localises to the cell inner membrane. F(1)F(0) ATP synthase produces ATP from ADP in the presence of a proton or sodium gradient. F-type ATPases consist of two structural domains, F(1) containing the extramembraneous catalytic core and F(0) containing the membrane proton channel, linked together by a central stalk and a peripheral stalk. During catalysis, ATP synthesis in the catalytic domain of F(1) is coupled via a rotary mechanism of the central stalk subunits to proton translocation. In terms of biological role, key component of the F(0) channel; it plays a direct role in translocation across the membrane. A homomeric c-ring of between 10-14 subunits forms the central stalk rotor element with the F(1) delta and epsilon subunits. The sequence is that of ATP synthase subunit c from Shewanella putrefaciens (strain CN-32 / ATCC BAA-453).